A 635-amino-acid polypeptide reads, in one-letter code: Extracellular metalloproteinase 1 (635 aa).

The signal sequence occupies residues 1–19 (MHGLLLAAGLLSLPLHVLA). A propeptide spanning residues 20–246 (HPQPSTSTSL…VHNVVDYVAH (227 aa)) is cleaved from the precursor. N287 is a glycosylation site (N-linked (GlcNAc...) asparagine). H430 serves as a coordination point for Zn(2+). Residue E431 is part of the active site. H434 contributes to the Zn(2+) binding site. Residues N475, N594, and N623 are each glycosylated (N-linked (GlcNAc...) asparagine).

It belongs to the peptidase M36 family. Zn(2+) serves as cofactor.

The protein localises to the secreted. Secreted metalloproteinase probably acting as a virulence factor. The sequence is that of Extracellular metalloproteinase 1 (MEP1) from Trichophyton tonsurans (Scalp ringworm fungus).